Consider the following 378-residue polypeptide: Interleukin-3 receptor subunit alpha (378 aa).

The first 18 residues, 1–18, serve as a signal peptide directing secretion; that stretch reads MVLLWLTLLLIALPCLLQ. Residues 19-305 are Extracellular-facing; sequence TKEDPNPPIT…EEGANTRAWR (287 aa). N-linked (GlcNAc...) asparagine glycans are attached at residues Asn46, Asn64, Asn80, and Asn109. Intrachain disulfides connect Cys52–Cys68, Cys76–Cys195, Cys112–Cys122, and Cys151–Cys165. Asn212 and Asn218 each carry an N-linked (GlcNAc...) asparagine glycan. A disulfide bridge connects residues Cys217 and Cys293. The short motif at 282-286 is the WSXWS motif element; the sequence is LSAWS. Residues 306 to 325 form a helical membrane-spanning segment; sequence TSLLIALGTLLALVCVFVIC. Residues 326 to 378 are Cytoplasmic-facing; the sequence is RRYLVMQRLFPRIPHMKDPIGDSFQNDKLVVWEAGKAGLEECLVTEVQVVQKT. The short motif at 334 to 342 is the Box 1 motif element; sequence LFPRIPHMK.

It belongs to the type I cytokine receptor family. Type 5 subfamily. Interacts with IL3. Heterodimer of an alpha and a beta subunit. The beta subunit is common to the IL3, IL5 and GM-CSF receptors. Post-translationally, ubiquitinated by RNFT2 in response to IL3. Ubiquitination leads ligand-induced degradation by the proteasome. Ubiquitinated by RNF128 via 'Lys-27'-linked polyubiquitination, facilitating its degradation through the lysosomal pathway.

It is found in the cell membrane. In terms of biological role, cell surface receptor for IL3 expressed on hematopoietic progenitor cells, monocytes and B-lymphocytes that controls the production and differentiation of hematopoietic progenitor cells into lineage-restricted cells. Ligand stimulation rapidly induces hetrodimerization with IL3RB, phosphorylation and enzyme activity of effector proteins such as JAK2 and PI3K that play a role in signaling cell proliferation and differentiation. Activation of JAK2 leads to STAT5-mediated transcriptional program. In Homo sapiens (Human), this protein is Interleukin-3 receptor subunit alpha.